Reading from the N-terminus, the 212-residue chain is MTSTLVLASASPARRQVLRAAGIDPVVRVSDVDEDAVAAALPPDTAPATVVVELARAKAAAVAADIPEYAADCVVVGCDSMLLLDGELQGKPHTPEVARARWAQMAGRSAELVTGHCVLRLRGGAVVAEATDCSATTVHFAKPEPEELDAYLASGEPLQVAGAFTLDGLGGWFVDRIEGDPSSVIGIGLPLLRRLLGDVGVGVAQLWRHPAR.

The active-site Proton acceptor is the aspartate 79.

Belongs to the Maf family. It depends on a divalent metal cation as a cofactor.

It localises to the cytoplasm. The enzyme catalyses a ribonucleoside 5'-triphosphate + H2O = a ribonucleoside 5'-phosphate + diphosphate + H(+). The catalysed reaction is a 2'-deoxyribonucleoside 5'-triphosphate + H2O = a 2'-deoxyribonucleoside 5'-phosphate + diphosphate + H(+). Functionally, nucleoside triphosphate pyrophosphatase. May have a dual role in cell division arrest and in preventing the incorporation of modified nucleotides into cellular nucleic acids. The protein is Nucleoside triphosphate pyrophosphatase of Nocardia farcinica (strain IFM 10152).